Consider the following 203-residue polypeptide: Thymidylate kinase (203 aa).

Residue 14 to 21 (GGEGIGKS) participates in ATP binding.

It belongs to the thymidylate kinase family.

It carries out the reaction dTMP + ATP = dTDP + ADP. Functionally, phosphorylation of dTMP to form dTDP in both de novo and salvage pathways of dTTP synthesis. This Rickettsia conorii (strain ATCC VR-613 / Malish 7) protein is Thymidylate kinase.